The chain runs to 1373 residues: Inactive tyrosine-protein kinase PRAG1 (1373 aa).

Disordered stretches follow at residues Ala31–Arg50 and Thr197–Gly235. A Phosphotyrosine modification is found at Tyr238. Composition is skewed to basic and acidic residues over residues Asp250–Gly263 and Gln272–Gln284. The tract at residues Asp250–His338 is disordered. Positions Ser317–Ser333 are enriched in low complexity. Phosphotyrosine occurs at positions 343 and 391. Disordered regions lie at residues Gln376 to Pro448 and Ile468 to Lys794. Polar residues predominate over residues Ser419 to Ser438. Positions Arg506–Pro522 are enriched in basic and acidic residues. Low complexity predominate over residues Pro526–Val538. Polar residues-rich tracts occupy residues Asn568–Val578 and Thr655–Ala670. Phosphoserine is present on residues Ser671 and Ser720. Composition is skewed to polar residues over residues Val711–Pro721 and Ser729–Ser740. Phosphoserine occurs at positions 757 and 802. The tract at residues Pro804–Leu823 is disordered. The segment at Ser911–Gly954 is required for homodimerization. The region spanning Val945–Leu1296 is the Protein kinase domain. Residues Leu1041 to Asp1050 show a composition bias toward polar residues. Disordered regions lie at residues Leu1041–Gln1062 and Gln1138–Pro1171. The span at Ser1139–Cys1167 shows a compositional bias: low complexity. The required for homodimerization stretch occupies residues Gly1298–Leu1373.

The protein belongs to the protein kinase superfamily. Homodimer. Dimerization leads to the catalytic activation of CSK. Interacts (via C-terminus) with RND2. Interacts with CSK (via SH2 domain) in a Tyr-391 phosphorylation-dependent manner; this interaction potentiates kinase activity of CSK. Interacts with NOTCH1 intracellular domain (N1ICD). Forms a complex with PRAG1, N1ICD and MAML1, in a MAML1-dependent manner. In terms of processing, phosphorylated by CSK on Tyr-238, Tyr-343, and Tyr-391; Tyr-391 is a primary site of phosphorylation.

The protein localises to the cytoplasm. Its subcellular location is the nucleus. It localises to the cell junction. The protein resides in the focal adhesion. Its function is as follows. Catalytically inactive protein kinase that acts as a scaffold protein. Functions as an effector of the small GTPase RND2, which stimulates RhoA activity and inhibits NGF-induced neurite outgrowth. Promotes Src family kinase (SFK) signaling by regulating the subcellular localization of CSK, a negative regulator of these kinases, leading to the regulation of cell morphology and motility by a CSK-dependent mechanism. Acts as a critical coactivator of Notch signaling. This chain is Inactive tyrosine-protein kinase PRAG1, found in Mus musculus (Mouse).